Consider the following 525-residue polypeptide: Ribonuclease III domain-containing protein RNC1, chloroplastic (525 aa).

Residues 1–28 (MGPPAMAFQALTLTPLPFSLHSSSRRVR) constitute a chloroplast transit peptide. 2 RNase III domains span residues 125 to 271 (LLEA…LCFG) and 403 to 503 (EHPR…CVYG).

Interacts with RNA. Part of large ribonucleo-protein particles that contain CAF1 and/or CAF2.

It is found in the plastid. The protein localises to the chloroplast stroma. Its function is as follows. Binds specific group II introns in chloroplasts and facilitates their splicing. Acts on both subgroup IIA and subgroup IIB introns. The substrates of the subgroup II also require the CRM domain proteins CAF1 or CAF2. Binds both single-stranded and double-stranded RNA non-specifically, but lacks endonuclease activity. Required for plastid ribosome biogenesis. This is Ribonuclease III domain-containing protein RNC1, chloroplastic from Zea mays (Maize).